A 280-amino-acid polypeptide reads, in one-letter code: 2-dehydro-3-deoxyphosphooctonate aldolase (280 aa).

This sequence belongs to the KdsA family.

It localises to the cytoplasm. It carries out the reaction D-arabinose 5-phosphate + phosphoenolpyruvate + H2O = 3-deoxy-alpha-D-manno-2-octulosonate-8-phosphate + phosphate. Its pathway is carbohydrate biosynthesis; 3-deoxy-D-manno-octulosonate biosynthesis; 3-deoxy-D-manno-octulosonate from D-ribulose 5-phosphate: step 2/3. It functions in the pathway bacterial outer membrane biogenesis; lipopolysaccharide biosynthesis. The protein is 2-dehydro-3-deoxyphosphooctonate aldolase of Thiobacillus denitrificans (strain ATCC 25259 / T1).